The following is an 81-amino-acid chain: Large ribosomal subunit protein bL27 (81 aa).

The disordered stretch occupies residues 1 to 22; it reads MAHKTGQSSSSNGRESKSKRLG.

Belongs to the bacterial ribosomal protein bL27 family.

The chain is Large ribosomal subunit protein bL27 from Opitutus terrae (strain DSM 11246 / JCM 15787 / PB90-1).